We begin with the raw amino-acid sequence, 276 residues long: Protein FAM151B (276 aa).

It belongs to the menorin family.

Essential for survival of retinal photoreceptor cells. This is Protein FAM151B (FAM151B) from Homo sapiens (Human).